The sequence spans 391 residues: MFGTATRDNATRVLLLGSGELGKEVAIECQRLGLEVIACDRYADAPAMQVAHRSHVFDMLDADALQQVIDLEKPHFVVPEIEAIATSKLVELEAQGLNVVPTANATRLTMNREGIRRLAAEELGLPTSAYQFADSYESFAAAVETIGLPCVCKPVMSSSGKGQSVIRTPEQIEAAWQYAQQGGRSGAGRVIVEGFVDFDYEITLLTVRAVDGVHFCAPIGHRQEDGDYRESWQPQVMSENAIKAAEYVAEQVVNALGGYGLFGVELFVKGDKVIFNEVSPRPHDTGMVTLISQELSEFALHVRAFTGLPIGQIVQYGPSASAAILGQGQSQNIQFNGLDDALSIPHTQVRLFGKPDIAGRRRLGVALSRGKTTQEATDRAIECAKAVKIHY.

N(1)-(5-phospho-beta-D-ribosyl)glycinamide contacts are provided by residues 20 to 21 (EL) and glutamate 80. ATP contacts are provided by residues arginine 112, lysine 153, 158–163 (SSGKGQ), 193–196 (EGFV), and glutamate 201. Positions 117-306 (RLAAEELGLP…EFALHVRAFT (190 aa)) constitute an ATP-grasp domain. Positions 265 and 277 each coordinate Mg(2+). N(1)-(5-phospho-beta-D-ribosyl)glycinamide is bound by residues aspartate 284, lysine 354, and 361-362 (RR).

It belongs to the PurK/PurT family. In terms of assembly, homodimer.

The enzyme catalyses N(1)-(5-phospho-beta-D-ribosyl)glycinamide + formate + ATP = N(2)-formyl-N(1)-(5-phospho-beta-D-ribosyl)glycinamide + ADP + phosphate + H(+). It participates in purine metabolism; IMP biosynthesis via de novo pathway; N(2)-formyl-N(1)-(5-phospho-D-ribosyl)glycinamide from N(1)-(5-phospho-D-ribosyl)glycinamide (formate route): step 1/1. Involved in the de novo purine biosynthesis. Catalyzes the transfer of formate to 5-phospho-ribosyl-glycinamide (GAR), producing 5-phospho-ribosyl-N-formylglycinamide (FGAR). Formate is provided by PurU via hydrolysis of 10-formyl-tetrahydrofolate. This is Formate-dependent phosphoribosylglycinamide formyltransferase from Vibrio cholerae serotype O1 (strain ATCC 39315 / El Tor Inaba N16961).